Here is a 122-residue protein sequence, read N- to C-terminus: Large ribosomal subunit protein bL12 (122 aa).

Belongs to the bacterial ribosomal protein bL12 family. As to quaternary structure, homodimer. Part of the ribosomal stalk of the 50S ribosomal subunit. Forms a multimeric L10(L12)X complex, where L10 forms an elongated spine to which 2 to 4 L12 dimers bind in a sequential fashion. Binds GTP-bound translation factors.

In terms of biological role, forms part of the ribosomal stalk which helps the ribosome interact with GTP-bound translation factors. Is thus essential for accurate translation. The sequence is that of Large ribosomal subunit protein bL12 from Stutzerimonas stutzeri (strain A1501) (Pseudomonas stutzeri).